The primary structure comprises 492 residues: Cytochrome P450 2A12 (492 aa).

C437 is a heme binding site.

This sequence belongs to the cytochrome P450 family. Heme is required as a cofactor. Liver.

The protein resides in the endoplasmic reticulum membrane. Its subcellular location is the microsome membrane. It catalyses the reaction an organic molecule + reduced [NADPH--hemoprotein reductase] + O2 = an alcohol + oxidized [NADPH--hemoprotein reductase] + H2O + H(+). Functionally, highly active in the 7-alpha-hydroxylation of testosterone. The polypeptide is Cytochrome P450 2A12 (Cyp2a12) (Mus musculus (Mouse)).